Reading from the N-terminus, the 476-residue chain is Ankyrin repeat, SAM and basic leucine zipper domain-containing protein 1 (476 aa).

Residues Ser18 and Ser21 each carry the phosphoserine modification. ANK repeat units follow at residues 46–75, 79–108, 111–145, 149–178, 182–211, and 215–244; these read EKNETFKKALTTGDISLVEELLDSGISIDS, YGWTPLMYAASVANVELVRVLLDRGANASF, DKQTILITACSARGSEEQILKCVELLLSRNADPNV, RLMTPVMYAARAGHPQVVAVLVAYGAEVNT, NGYTALTWAARQGHKNVILKLLELGADKML, and DGKTPSEIAKRNKHLEIFNFLSLSLNPLEG. The 63-residue stretch at 273–335 folds into the SAM domain; sequence SYAAFEDLEI…KILAALKELE (63 aa).

As to quaternary structure, interacts with DDX4, PIWIL1, RANBP9 and TDRD1.

It localises to the cytoplasm. Functionally, plays a central role during spermatogenesis by repressing transposable elements and preventing their mobilization, which is essential for the germline integrity. Acts via the piRNA metabolic process, which mediates the repression of transposable elements during meiosis by forming complexes composed of piRNAs and Piwi proteins and governs the methylation and subsequent repression of transposons. Its association with pi-bodies suggests a participation in the primary piRNAs metabolic process. Required prior to the pachytene stage to facilitate the production of multiple types of piRNAs, including those associated with repeats involved in the regulation of retrotransposons. May act by mediating protein-protein interactions during germ cell maturation. This Dasypus novemcinctus (Nine-banded armadillo) protein is Ankyrin repeat, SAM and basic leucine zipper domain-containing protein 1 (ASZ1).